Reading from the N-terminus, the 245-residue chain is Probable phosphatase YcdX (245 aa).

Zn(2+)-binding residues include His-7, His-9, His-15, His-40, Glu-73, His-101, His-131, Asp-192, and His-194.

The protein belongs to the PHP family. In terms of assembly, homotrimer. Zn(2+) is required as a cofactor.

In Escherichia coli O81 (strain ED1a), this protein is Probable phosphatase YcdX.